A 58-amino-acid polypeptide reads, in one-letter code: MKILSVLLIALIICSINICSEAGLIDVRCYASRECWEPCRRVTGSAQAKCQNNQCRCY.

The first 22 residues, Met-1 to Ala-22, serve as a signal peptide directing secretion. Cystine bridges form between Cys-29–Cys-50, Cys-35–Cys-55, and Cys-39–Cys-57.

The protein belongs to the short scorpion toxin superfamily. Potassium channel inhibitor family. Alpha-KTx 16 subfamily. As to expression, expressed by the venom gland.

The protein resides in the secreted. Functionally, inhibits potassium channel. The protein is Potassium channel toxin alpha-KTx 16.6 of Buthus israelis (Israeli scorpion).